The sequence spans 561 residues: Acylcarnitine hydrolase (561 aa).

The signal sequence occupies residues 1-26 (MTRNQLHNWLNAGFFGLLLLLIHVQG). Residues C97 and C125 are joined by a disulfide bond. S230 serves as the catalytic Acyl-ester intermediate. C282 and C293 are disulfide-bonded. Catalysis depends on charge relay system residues E347 and H459. A Prevents secretion from ER motif is present at residues 558–561 (HREL).

This sequence belongs to the type-B carboxylesterase/lipase family. In terms of tissue distribution, detected in liver (at protein level).

Its subcellular location is the microsome. The protein resides in the endoplasmic reticulum. The catalysed reaction is an O-acyl-(R)-carnitine + H2O = (R)-carnitine + a fatty acid + H(+). It catalyses the reaction all-trans-retinyl hexadecanoate + H2O = all-trans-retinol + hexadecanoate + H(+). Functionally, hydrolase with high activity towards palmitoylcarnitine. Is also active with p-nitrophenylacetate and alpha-naphthylacetate. May also hydrolyze retinyl esters. The protein is Acylcarnitine hydrolase of Mus musculus (Mouse).